Consider the following 625-residue polypeptide: Thioredoxin domain-containing protein 6 (625 aa).

The segment at 158-302 (KSYTVAIIKP…FFFPNFKISN (145 aa)) is NDK. Residues 594 to 625 (GETPETSASDISRNAAAQGDDPEQDESKEMEE) are disordered. The span at 613–625 (DDPEQDESKEMEE) shows a compositional bias: acidic residues.

The protein belongs to the NDK family. In terms of assembly, monomer and homodimer.

It localises to the cytoplasm. Its subcellular location is the cytoskeleton. The protein localises to the cilium axoneme. The protein resides in the dynein axonemal particle. Functionally, may be a regulator of microtubule physiology. This chain is Thioredoxin domain-containing protein 6, found in Xenopus laevis (African clawed frog).